Consider the following 645-residue polypeptide: Macrolide export ATP-binding/permease protein MacB (645 aa).

An ABC transporter domain is found at 6–244 (IELKDVTRYY…EAPQYRYARK (239 aa)). ATP is bound at residue 42 to 49 (GQSGSGKS). The next 4 helical transmembrane spans lie at 271-291 (ALTLLGVVIGVSAVVAMLAIG), 520-540 (FSILLGSVAAISLLVGGIGVM), 577-597 (VVGGLGGIAGVAIGFGIVFII), and 608-628 (PLPAILAFSSALGTGLVFGLL).

This sequence belongs to the ABC transporter superfamily. Macrolide exporter (TC 3.A.1.122) family. As to quaternary structure, homodimer.

The protein resides in the cell inner membrane. In terms of biological role, non-canonical ABC transporter that contains transmembrane domains (TMD), which form a pore in the inner membrane, and an ATP-binding domain (NBD), which is responsible for energy generation. Confers resistance against macrolides. In Hyphomonas neptunium (strain ATCC 15444), this protein is Macrolide export ATP-binding/permease protein MacB.